We begin with the raw amino-acid sequence, 278 residues long: Putative B3 domain-containing protein At2g21920 (278 aa).

A DNA-binding region (TF-B3) is located at residues 168–275 (ISKTLSRTDV…KFIILNFEYN (108 aa)).

The protein resides in the nucleus. This is Putative B3 domain-containing protein At2g21920 from Arabidopsis thaliana (Mouse-ear cress).